The chain runs to 475 residues: UDP-N-acetylmuramate--L-alanine ligase (475 aa).

112-118 lines the ATP pocket; sequence GTHGKTT.

This sequence belongs to the MurCDEF family.

It localises to the cytoplasm. The enzyme catalyses UDP-N-acetyl-alpha-D-muramate + L-alanine + ATP = UDP-N-acetyl-alpha-D-muramoyl-L-alanine + ADP + phosphate + H(+). Its pathway is cell wall biogenesis; peptidoglycan biosynthesis. In terms of biological role, cell wall formation. The protein is UDP-N-acetylmuramate--L-alanine ligase of Cupriavidus pinatubonensis (strain JMP 134 / LMG 1197) (Cupriavidus necator (strain JMP 134)).